The following is a 537-amino-acid chain: Chaperonin GroEL 2 (537 aa).

Residues 29–32 (TLGP), 86–90 (DGTTT), Gly413, 477–479 (NAA), and Asp493 contribute to the ATP site.

The protein belongs to the chaperonin (HSP60) family. As to quaternary structure, forms a cylinder of 14 subunits composed of two heptameric rings stacked back-to-back. Interacts with the co-chaperonin GroES.

Its subcellular location is the cytoplasm. The enzyme catalyses ATP + H2O + a folded polypeptide = ADP + phosphate + an unfolded polypeptide.. Functionally, together with its co-chaperonin GroES, plays an essential role in assisting protein folding. The GroEL-GroES system forms a nano-cage that allows encapsulation of the non-native substrate proteins and provides a physical environment optimized to promote and accelerate protein folding. The sequence is that of Chaperonin GroEL 2 from Thermobifida fusca (strain YX).